The following is a 101-amino-acid chain: TrfB transcriptional repressor protein (101 aa).

Residues Gln37–His56 constitute a DNA-binding region (H-T-H motif).

In conjunction with KorB, inhibits the transcription of kilA, trfA and korAB operons. In conjunction with KorC is responsible for the negative control of kilC and kilE operons. The polypeptide is TrfB transcriptional repressor protein (trfB) (Escherichia coli).